Consider the following 227-residue polypeptide: Extracellular small neutral protease (227 aa).

The first 29 residues, 1 to 29, serve as a signal peptide directing secretion; sequence MRITLPLLSTAVGLGLTAAVLGTGPAATA. A propeptide spanning residues 30–42 is cleaved from the precursor; sequence AAPQEPVRAAQLG. Residues D156 and T158 each coordinate Ca(2+). Residue H163 participates in Zn(2+) binding. Residue E164 is part of the active site. The Zn(2+) site is built by H167 and D173. A disulfide bridge connects residues C179 and C192.

This sequence belongs to the peptidase M7 family. Ca(2+) serves as cofactor. Requires Zn(2+) as cofactor. Post-translationally, the N-terminus is blocked.

Its subcellular location is the secreted. The catalysed reaction is Hydrolyzes proteins with a preference for Tyr or Phe in the P1' position. Has no action on amino-acid p-nitroanilides.. The sequence is that of Extracellular small neutral protease (snpA) from Streptomyces lividans.